We begin with the raw amino-acid sequence, 760 residues long: Catecholate siderophore receptor Fiu (760 aa).

The first 31 residues, 1–31 (MENNRNFPARQFHSLTFFAGLCIGITPVAQA), serve as a signal peptide directing secretion. Residues 67 to 175 (PVADTTRTMT…PTGSINMISK (109 aa)) enclose the TBDR plug domain. The TBDR beta-barrel domain maps to 180–760 (DSGIDASASI…TFLLTANMHF (581 aa)). The short motif at 743-760 (RYHPGEPRTFLLTANMHF) is the TonB C-terminal box element.

It belongs to the TonB-dependent receptor family.

The protein resides in the cell outer membrane. Functionally, involved in the active transport across the outer membrane of iron complexed with catecholate siderophores such as dihydroxybenzoylserine and dihydroxybenzoate. It derives its energy for transport by interacting with the trans-periplasmic membrane protein TonB. Can also transport catechol-substituted cephalosporins. Receptor for microcins M, H47 and E492. In Escherichia coli O6:H1 (strain CFT073 / ATCC 700928 / UPEC), this protein is Catecholate siderophore receptor Fiu (fiu).